The following is a 725-amino-acid chain: Catalase-peroxidase (725 aa).

The tryptophyl-tyrosyl-methioninium (Trp-Tyr) (with M-239) cross-link spans 90-213; sequence WHSAGTYRTG…LAAVQMGLIY (124 aa). H91 serves as the catalytic Proton acceptor. Positions 213–239 form a cross-link, tryptophyl-tyrosyl-methioninium (Tyr-Met) (with W-90); sequence YVNPEGPNGNPDPVAAAKDIRETFARM. H254 provides a ligand contact to heme b.

It belongs to the peroxidase family. Peroxidase/catalase subfamily. As to quaternary structure, homodimer or homotetramer. It depends on heme b as a cofactor. In terms of processing, formation of the three residue Trp-Tyr-Met cross-link is important for the catalase, but not the peroxidase activity of the enzyme.

The catalysed reaction is H2O2 + AH2 = A + 2 H2O. It carries out the reaction 2 H2O2 = O2 + 2 H2O. Bifunctional enzyme with both catalase and broad-spectrum peroxidase activity. The protein is Catalase-peroxidase of Hahella chejuensis (strain KCTC 2396).